Reading from the N-terminus, the 669-residue chain is Probable potassium transport system protein Kup (669 aa).

Transmembrane regions (helical) follow at residues 47-67 (VLML…TSPL), 86-106 (VIGI…IKYM), 144-164 (TIIG…TPAI), 172-192 (GLTL…IFVM), 206-226 (IGVI…LLGI), 252-272 (GMAG…GEAL), 288-308 (WFFV…ALLL), 326-346 (ALLP…QALI), 378-398 (IYIP…VLTF), 404-424 (LAAA…ILAF), 435-455 (LLKS…FFGA), and 460-480 (IPHG…LMTT).

It belongs to the HAK/KUP transporter (TC 2.A.72) family.

The protein resides in the cell inner membrane. It carries out the reaction K(+)(in) + H(+)(in) = K(+)(out) + H(+)(out). Its function is as follows. Transport of potassium into the cell. Likely operates as a K(+):H(+) symporter. The sequence is that of Probable potassium transport system protein Kup from Bdellovibrio bacteriovorus (strain ATCC 15356 / DSM 50701 / NCIMB 9529 / HD100).